Consider the following 1938-residue polypeptide: Myosin-6 (1938 aa).

Residues 31 to 80 (DIRTECFVPDDKEEYVKAKIVSREGGKVTAETENGKTVTVKEDQVMQQNP) form the Myosin N-terminal SH3-like domain. The region spanning 84 to 779 (DKIEDMAMLT…LLGLLEEMRD (696 aa)) is the Myosin motor domain. An N6,N6,N6-trimethyllysine modification is found at Lys-128. 177–184 (GESGAGKT) contributes to the ATP binding site. A Phosphothreonine modification is found at Thr-378. Ser-416 is subject to Phosphoserine. 2 actin-binding regions span residues 656 to 678 (LNKL…IPNE) and 758 to 772 (KFGH…GLLG). The IQ domain occupies 782–811 (LSRIITRIQAQARGQLMRIEFKKMVERRDA). Calmodulin-binding regions lie at residues 789 to 806 (IQAQ…KKMV) and 815 to 832 (IQWN…PWMK). Residues 842-1938 (KSAETEKEMA…GAKQKMHDEE (1097 aa)) are a coiled coil. Phosphoserine occurs at positions 1089 and 1138. The residue at position 1260 (Tyr-1260) is a Phosphotyrosine. Ser-1270 is subject to Phosphoserine. Residues Thr-1276 and Thr-1283 each carry the phosphothreonine modification. A Phosphoserine modification is found at Ser-1308. Tyr-1309 bears the Phosphotyrosine mark. At Thr-1310 the chain carries Phosphothreonine. Position 1511 is a phosphoserine (Ser-1511). 2 positions are modified to phosphothreonine: Thr-1514 and Thr-1680. The segment at 1907–1938 (AEERADIAESQVNKLRAKSRDIGAKQKMHDEE) is disordered. Over residues 1924-1938 (KSRDIGAKQKMHDEE) the composition is skewed to basic and acidic residues.

Belongs to the TRAFAC class myosin-kinesin ATPase superfamily. Myosin family. Muscle myosin is a hexameric protein that consists of 2 heavy chain subunits (MHC), 2 alkali light chain subunits (MLC) and 2 regulatory light chain subunits (MLC-2).

The protein resides in the cytoplasm. It is found in the myofibril. Functionally, muscle contraction. The protein is Myosin-6 (Myh6) of Rattus norvegicus (Rat).